The following is a 181-amino-acid chain: MSFSDQNLIWIDLEMTGLDPEMHKIIEMATIVTDSELNILAEGPVIAIHQPESELAKMDEWCTTTHTASGLVARVRQSQVSEEEAIDQTLAFLKQWVPEGKSPICGNSIGQDRRFLYKHMPRLEAYFHYRYIDVSTIKELTRRWQPEVLKEFSKTGSHLALDDIRESIAELQFYRKAVFKI.

The region spanning 8-171 (LIWIDLEMTG…DDIRESIAEL (164 aa)) is the Exonuclease domain. Tyr129 is an active-site residue.

It belongs to the oligoribonuclease family.

It is found in the cytoplasm. In terms of biological role, 3'-to-5' exoribonuclease specific for small oligoribonucleotides. In Vibrio cholerae serotype O1 (strain ATCC 39541 / Classical Ogawa 395 / O395), this protein is Oligoribonuclease.